The following is a 369-amino-acid chain: Phospho-N-acetylmuramoyl-pentapeptide-transferase (369 aa).

10 helical membrane passes run 3–23 (ALLGAGAISLVFTLFLTPLFI), 53–73 (GGIVIILASVIGYFAGHLLTW), 81–101 (VTPSGLLVVFMMVGLGFVGFL), 118–138 (WQKIAGQVIVATVFAVLAITL), 162–182 (FMALGAVIGTGLFIVWICLIV), 198–218 (LAAGASIFSIGSYVIIGFWQF), 240–260 (PLDLAIIAASIVGALIGFLWW), 267–287 (IFMGDTGSLGLGGALAALAIL), 290–310 (TELLLVFIGGLFVIVAGSVVL), and 347–367 (FWIIAGLLVAAGVGTFYLEWI).

Belongs to the glycosyltransferase 4 family. MraY subfamily. It depends on Mg(2+) as a cofactor.

Its subcellular location is the cell membrane. The catalysed reaction is UDP-N-acetyl-alpha-D-muramoyl-L-alanyl-gamma-D-glutamyl-meso-2,6-diaminopimeloyl-D-alanyl-D-alanine + di-trans,octa-cis-undecaprenyl phosphate = di-trans,octa-cis-undecaprenyl diphospho-N-acetyl-alpha-D-muramoyl-L-alanyl-D-glutamyl-meso-2,6-diaminopimeloyl-D-alanyl-D-alanine + UMP. Its pathway is cell wall biogenesis; peptidoglycan biosynthesis. Catalyzes the initial step of the lipid cycle reactions in the biosynthesis of the cell wall peptidoglycan: transfers peptidoglycan precursor phospho-MurNAc-pentapeptide from UDP-MurNAc-pentapeptide onto the lipid carrier undecaprenyl phosphate, yielding undecaprenyl-pyrophosphoryl-MurNAc-pentapeptide, known as lipid I. The protein is Phospho-N-acetylmuramoyl-pentapeptide-transferase of Clavibacter sepedonicus (Clavibacter michiganensis subsp. sepedonicus).